A 367-amino-acid polypeptide reads, in one-letter code: Uroporphyrinogen decarboxylase (367 aa).

Residues 27-31, D77, Y157, T212, and H333 contribute to the substrate site; that span reads RQAGR.

It belongs to the uroporphyrinogen decarboxylase family. Homodimer.

The protein localises to the cytoplasm. It catalyses the reaction uroporphyrinogen III + 4 H(+) = coproporphyrinogen III + 4 CO2. It participates in porphyrin-containing compound metabolism; protoporphyrin-IX biosynthesis; coproporphyrinogen-III from 5-aminolevulinate: step 4/4. Its function is as follows. Catalyzes the decarboxylation of four acetate groups of uroporphyrinogen-III to yield coproporphyrinogen-III. This is Uroporphyrinogen decarboxylase from Cupriavidus metallidurans (strain ATCC 43123 / DSM 2839 / NBRC 102507 / CH34) (Ralstonia metallidurans).